We begin with the raw amino-acid sequence, 319 residues long: Ribonuclease Z (319 aa).

Zn(2+) is bound by residues His-62, His-64, Asp-66, His-67, His-145, Asp-216, and His-274. The active-site Proton acceptor is the Asp-66.

Belongs to the RNase Z family. In terms of assembly, homodimer. It depends on Zn(2+) as a cofactor.

The catalysed reaction is Endonucleolytic cleavage of RNA, removing extra 3' nucleotides from tRNA precursor, generating 3' termini of tRNAs. A 3'-hydroxy group is left at the tRNA terminus and a 5'-phosphoryl group is left at the trailer molecule.. Zinc phosphodiesterase, which displays some tRNA 3'-processing endonuclease activity. Probably involved in tRNA maturation, by removing a 3'-trailer from precursor tRNA. The polypeptide is Ribonuclease Z (Synechococcus sp. (strain CC9605)).